Consider the following 199-residue polypeptide: dCTP deaminase, dUMP-forming (199 aa).

DCTP-binding positions include 101–106 (KSSLGR), Asp-119, 127–129 (TLE), Gln-148, Tyr-162, and Gln-174. Glu-129 serves as the catalytic Proton donor/acceptor. Positions 163-199 (GSAAAGSKYQGQRGPTPSRSYLNFPLPSDAVDAVESR) are disordered. A compositionally biased stretch (polar residues) spans 171–183 (YQGQRGPTPSRSY).

The protein belongs to the dCTP deaminase family. Homotrimer.

It carries out the reaction dCTP + 2 H2O = dUMP + NH4(+) + diphosphate. The protein operates within pyrimidine metabolism; dUMP biosynthesis; dUMP from dCTP: step 1/1. In terms of biological role, bifunctional enzyme that catalyzes both the deamination of dCTP to dUTP and the hydrolysis of dUTP to dUMP without releasing the toxic dUTP intermediate. The chain is dCTP deaminase, dUMP-forming from Nocardia farcinica (strain IFM 10152).